Consider the following 322-residue polypeptide: TATA box-binding protein-like 2 (322 aa).

The interval 31–54 is disordered; the sequence is PALSSTQDSTYLSGRAGPSRESGA. Positions 32–42 are enriched in polar residues; sequence ALSSTQDSTYL.

This sequence belongs to the TBP family.

Its subcellular location is the nucleus. Its function is as follows. TATA box-binding transcription factor. Members of the TBP family are differentially required to regulate transcription and development during early embryogenesis. The sequence is that of TATA box-binding protein-like 2 from Takifugu rubripes (Japanese pufferfish).